Reading from the N-terminus, the 246-residue chain is Ribosomal RNA large subunit methyltransferase E (246 aa).

S-adenosyl-L-methionine-binding residues include Gly81, Trp83, Asp104, Asp120, and Asp144. Catalysis depends on Lys184, which acts as the Proton acceptor.

This sequence belongs to the class I-like SAM-binding methyltransferase superfamily. RNA methyltransferase RlmE family.

It is found in the cytoplasm. It catalyses the reaction uridine(2552) in 23S rRNA + S-adenosyl-L-methionine = 2'-O-methyluridine(2552) in 23S rRNA + S-adenosyl-L-homocysteine + H(+). Specifically methylates the uridine in position 2552 of 23S rRNA at the 2'-O position of the ribose in the fully assembled 50S ribosomal subunit. This is Ribosomal RNA large subunit methyltransferase E from Agrobacterium fabrum (strain C58 / ATCC 33970) (Agrobacterium tumefaciens (strain C58)).